The chain runs to 445 residues: Xylose isomerase (445 aa).

Residues histidine 99 and aspartate 102 contribute to the active site. 7 residues coordinate Mg(2+): glutamate 230, glutamate 266, histidine 269, aspartate 294, aspartate 305, aspartate 307, and aspartate 337.

Belongs to the xylose isomerase family. In terms of assembly, homotetramer. It depends on Mg(2+) as a cofactor.

It localises to the cytoplasm. The catalysed reaction is alpha-D-xylose = alpha-D-xylulofuranose. In Geobacillus thermodenitrificans (strain NG80-2), this protein is Xylose isomerase.